The sequence spans 1380 residues: Carboxypeptidase D (1380 aa).

The signal sequence occupies residues 1 to 31 (MASGRDERPPWRLGRLLLLMCLLLLGSSARA). Topologically, residues 32–1299 (AHIKKAEATT…DNRIFGLPRE (1268 aa)) are extracellular. The Peptidase M14 1 domain maps to 57–380 (RYYHEEELES…ESLITLIEKV (324 aa)). Residues His139 and Glu142 each contribute to the Zn(2+) site. The short motif at 162–164 (RGD) is the Cell attachment site element. Asn172 carries N-linked (GlcNAc...) asparagine glycosylation. The interval 190 to 232 (AREGDCGFGDGGPSGASGRDNSRGRDLNRSFPDQFSTGEPPAL) is disordered. The segment covering 195-204 (CGFGDGGPSG) has biased composition (gly residues). The N-linked (GlcNAc...) asparagine glycan is linked to Asn217. Residue His257 coordinates Zn(2+). At Tyr265 the chain carries Phosphotyrosine. Phosphoserine is present on Ser270. The Proton donor/acceptor role is filled by Glu350. Asn399, Asn410, Asn429, and Asn522 each carry an N-linked (GlcNAc...) asparagine glycan. The Peptidase M14 2 domain maps to 502–792 (HHHHFPDMEI…RSLIQFMKQV (291 aa)). Residues His564 and Glu567 each coordinate Zn(2+). N-linked (GlcNAc...) asparagine glycosylation is present at Asn626. His671 provides a ligand contact to Zn(2+). The active-site Proton donor/acceptor is the Glu762. Residues Asn811, Asn855, Asn867, and Asn879 are each glycosylated (N-linked (GlcNAc...) asparagine). A disordered region spans residues 874–899 (STDSNNESKKGKGASSSTNDASDPTT). Positions 887 to 897 (ASSSTNDASDP) are enriched in polar residues. Residues 932-1211 (RYHSYKDLSE…RSLLSMLVEV (280 aa)) form the Peptidase M14 3 domain. Residues Asn955, Asn978, Asn1070, and Asn1142 are each glycosylated (N-linked (GlcNAc...) asparagine). A helical membrane pass occupies residues 1300–1320 (LVVTVSGATMSALILTACIIW). Residues Cys1317, Cys1321, and Cys1323 are each lipidated (S-palmitoyl cysteine). Residues 1321–1380 (CICSIKSNRHKDGFHRLRQHHDEYEDEIRMMSTGSKKSLLSHEFQDETDTEEETLYSSKH) lie on the Cytoplasmic side of the membrane. Residues Ser1358 and Ser1361 each carry the phosphoserine modification. Positions 1359-1380 (LLSHEFQDETDTEEETLYSSKH) are disordered. Residues Thr1368 and Thr1370 each carry the phosphothreonine modification.

This sequence belongs to the peptidase M14 family. The cofactor is Zn(2+). Highly expressed in placenta, pancreas and hepatoma cells. Lower levels found in skeletal muscle, heart and colon carcinoma and melanoma cell lines.

Its subcellular location is the cell membrane. The catalysed reaction is Releases C-terminal Arg and Lys from polypeptides.. This chain is Carboxypeptidase D (CPD), found in Homo sapiens (Human).